Consider the following 250-residue polypeptide: 5'-nucleotidase SurE (250 aa).

A divalent metal cation is bound by residues Asp-8, Asp-9, Ser-39, and Asn-95.

Belongs to the SurE nucleotidase family. It depends on a divalent metal cation as a cofactor.

The protein resides in the cytoplasm. It catalyses the reaction a ribonucleoside 5'-phosphate + H2O = a ribonucleoside + phosphate. Functionally, nucleotidase that shows phosphatase activity on nucleoside 5'-monophosphates. The sequence is that of 5'-nucleotidase SurE from Syntrophobacter fumaroxidans (strain DSM 10017 / MPOB).